Consider the following 2131-residue polypeptide: Nonribosomal peptide synthetase criC (2131 aa).

Residues 13–407 (FSQQCFQHPD…GRRDRVTKIR (395 aa)) are adenylation 1. The Carrier 1 domain occupies 525–601 (SGPLTIDQTI…ALVEKNRHET (77 aa)). Position 562 is an O-(pantetheine 4'-phosphoryl)serine (S562). A disordered region spans residues 598 to 627 (RHETENRPDSSAFATRTPEESSMPTQGPVT). The tract at residues 625-1018 (PVTPLQKRMV…YMSLLDAFLD (394 aa)) is condensation 1. The interval 1069 to 1447 (ASLHPTHIAV…GRKDRQVKVR (379 aa)) is adenylation 2. The Carrier 2 domain occupies 1569–1647 (SSEAHLEKLI…DLITLVAQQQ (79 aa)). An O-(pantetheine 4'-phosphoryl)serine modification is found at S1607. Residues 1688 to 2086 (SQSQSTFNVP…EALLLECFRM (399 aa)) form a condensation 2 region.

This sequence belongs to the NRP synthetase family. Requires pantetheine 4'-phosphate as cofactor.

The enzyme catalyses L-tryptophan + L-alanine + 2 ATP = cyclo(L-tryptophyl-L-alanyl) + 2 ADP + 2 phosphate + 2 H(+). It functions in the pathway secondary metabolite biosynthesis. The protein operates within alkaloid biosynthesis. In terms of biological role, nonribosomal peptide synthetase; part of the gene cluster that mediates the biosynthesis of echinulin family alkaloid. The pathway begins with the biosynthesis of the cyclic dipeptide cyclo-L-Trp-L-Ala (cyclo-TA) by the NRPS criC via condensation of L-alanine and L-tryptophan. The prenyltransferase criA then catalyzes the first prenylation step, a reverse prenylation reaction at C2, to yield preechinulin. Preechinulin is the substrate of the cytochrome P450 monooxygenase criE that catalyzes the formation of the double bond between C10 and C11 to produce neoechulin A. The unique prenyltransferase criF functions as a competitive enzyme with criE for preechinulin metabolization and uses preechinulin for effective regiospecific prenylations. Preechinulin is prenylated by criF at C5 or C7. C7-prenylation leads to accumulation of tardioxopiperazine B without further modification by criF. In contrast, the C5-prenylated tardioxopiperazine A can be prenylated again by criF, predominantly at C7 to form echinulin or less frequently at C4 to give variecolorin L. CriF also accepts neoechilunin A to produce varlecolorin G (prenylation at C5) or isoechinulin A (prenylation at C7). CriF further converts isoechinulin A into dehydroechinulin. Moreover, a yet unidentified enzyme can also convert neoechilunin A into neoechilunin B by introducing a double bond between positions C14 and C17 and thus provides a further substrate to criF for C5 and C7 prenylation. The polypeptide is Nonribosomal peptide synthetase criC (Aspergillus cristatus (Chinese Fuzhuan brick tea-fermentation fungus)).